Here is a 132-residue protein sequence, read N- to C-terminus: Small ribosomal subunit protein uS8 (132 aa).

It belongs to the universal ribosomal protein uS8 family. In terms of assembly, part of the 30S ribosomal subunit. Contacts proteins S5 and S12.

Its function is as follows. One of the primary rRNA binding proteins, it binds directly to 16S rRNA central domain where it helps coordinate assembly of the platform of the 30S subunit. The sequence is that of Small ribosomal subunit protein uS8 from Alkaliphilus oremlandii (strain OhILAs) (Clostridium oremlandii (strain OhILAs)).